We begin with the raw amino-acid sequence, 886 residues long: Methanogenesis regulatory histidine kinase FilI (886 aa).

A run of 2 helical transmembrane segments spans residues 7–27 and 270–290; these read ILAF…TFMC and VVGI…FLEL. The region spanning 290 to 344 is the HAMP domain; sequence LSILMPLATITSSVEAIREQEKGQGSRIPTVGPAELATLAESINEMLDHLESYNQ. One can recognise a PAS domain in the interval 349–419; that stretch reads SEKRFRTIVD…EKDAGVLSGE (71 aa). The PAC domain occupies 421–473; it reads FVGEVSAHTRAGSSMTFHAVKVPLRDDRGQVTGICGIARDITDIKEAGVELLK. Residues 674–886 form the Histidine kinase domain; sequence TVSHDLRSPL…TCVLFTLPTP (213 aa). Histidine 677 carries the phosphohistidine; by autocatalysis modification.

Autophosphorylated.

The protein resides in the cell membrane. It carries out the reaction ATP + protein L-histidine = ADP + protein N-phospho-L-histidine.. In terms of biological role, member of the two-component regulatory system FilI/FilRs, which is involved in the regulation of methanogenesis. Autophosphorylates and specifically transfers the phosphoryl group to both FilR1 and FilR2. Could also catalyze the synthesis of the quorum sensing (QS) signal molecules carboxyl-acyl homoserine lactones (AHLs), which regulate the transition of the cellular morphology from short cells to filaments and of the carbon metabolic flux from biomass formation to methane production. The chain is Methanogenesis regulatory histidine kinase FilI from Methanothrix harundinacea (strain 6Ac) (Methanosaeta harundinacea).